The chain runs to 4367 residues: Guanylate cyclase (4367 aa).

Positions 1 to 10 (MKKTRTTAAE) are enriched in polar residues. The tract at residues 1 to 70 (MKKTRTTAAE…MSFLQGKHQQ (70 aa)) is disordered. The Cytoplasmic segment spans residues 1–150 (MKKTRTTAAE…FKNLWEQFHR (150 aa)). The span at 19–33 (PHDEHRGRGREHGGA) shows a compositional bias: basic and acidic residues. Positions 54–63 (HQATQKQMSF) are enriched in polar residues. The helical transmembrane segment at 151-171 (VINWWFLVMAIIQAIPQLHYN) threads the bilayer. Topologically, residues 172–174 (PNH) are extracellular. A helical transmembrane segment spans residues 175–195 (AWSTALPFAIVLVFGMLKDAF). Topologically, residues 196-373 (TDLGRRERDR…GFKRPHIEKD (178 aa)) are cytoplasmic. Residues 374–394 (INTYLFISFFIVFLTILISVM) form a helical membrane-spanning segment. Residues 395–452 (SKWSVQERDSGDTGVTDAGASSGSGSSSGETSQTYGSSVEFMLGSRDLLQNPWMSILR) lie on the Extracellular side of the membrane. The tract at residues 402-426 (RDSGDTGVTDAGASSGSGSSSGETS) is disordered. Positions 407–426 (TGVTDAGASSGSGSSSGETS) are enriched in low complexity. Residues 453–473 (FLAVYAPVLPLSLPLILDVVY) form a helical membrane-spanning segment. Over 474-2258 (LLQSVLIEGD…VHGRLSLMRV (1785 aa)) the chain is Cytoplasmic. Disordered regions lie at residues 486–535 (IRGG…QQPL), 550–699 (SEKF…ISGR), 831–918 (ETSA…ASSL), 932–966 (RLEE…PQLA), 980–1047 (VGIQ…GELS), 1079–1164 (GMSF…MPAV), 1344–1593 (PSGT…SLKS), 1607–1652 (FRRG…TGTG), 1773–1861 (GGRG…GLRS), and 1881–1946 (DKQH…PQHL). Over residues 523 to 535 (AHSSQNASLQQPL) the composition is skewed to polar residues. Basic and acidic residues-rich tracts occupy residues 605-628 (ETLR…REQL) and 670-679 (RRSDDRDRKS). Residues 850 to 863 (SAASSRSQSAPASA) show a composition bias toward low complexity. Residues 880–892 (QTLTNQQTGQQSP) show a composition bias toward polar residues. The span at 906–917 (ASPGAADSPASS) shows a compositional bias: low complexity. Basic and acidic residues predominate over residues 932 to 948 (RLEETGSQKEEDSRSDR). The span at 983 to 996 (QSQHSSQSLLSSRQ) shows a compositional bias: low complexity. A compositionally biased stretch (basic and acidic residues) spans 1025–1047 (DRMYSRDYHRESRSSSPRDGELS). Composition is skewed to polar residues over residues 1084–1094 (SRPSSQFTFSS) and 1117–1130 (RSLT…TASP). The segment covering 1344-1357 (PSGTSASSGAPSGP) has biased composition (low complexity). Composition is skewed to gly residues over residues 1370-1381 (QGQGHGSLGAPG) and 1389-1400 (CLGGAGGSGARG). Pro residues predominate over residues 1443-1454 (VPSPRPLSPAGP). Residues 1527-1542 (SFKEKHEEFAFSKDED) show a composition bias toward basic and acidic residues. Acidic residues predominate over residues 1543–1567 (TATVDQDDTQSATDEEHDVEGEEEE). Low complexity predominate over residues 1583–1593 (SASASLMSLKS). Composition is skewed to polar residues over residues 1628–1652 (GRSS…TGTG), 1779–1791 (VSLS…SSAK), and 1843–1852 (VNPSGQTYSQ). The segment covering 1881–1922 (DKQHQRGHGPEGDEGSHELEGHDAHTGDSHGGHHRDQAEPRA) has biased composition (basic and acidic residues). Over residues 1933–1942 (RLPQKTQNRL) the composition is skewed to polar residues. Residues 2259–2279 (STVILWSFFKSLCIGLPTFLF) traverse the membrane as a helical segment. The Extracellular segment spans residues 2280–2289 (QPQAFWSAVE). The chain crosses the membrane as a helical span at residues 2290–2310 (VYDPLLLMIVDFFWTTLPGII). Residues 2311 to 2343 (HGYSDQDLPTHLLPSVPVLYTPGRRRLYFNGFR) are Cytoplasmic-facing. A helical membrane pass occupies residues 2344 to 2364 (FILWTVEGIIYSFLIFYLLQA). Over 2365-2376 (TWMDGNTFHDGQ) the chain is Extracellular. Residues 2377-2397 (VLGFHSYGILLLFGSLLQSNV) traverse the membrane as a helical segment. Topologically, residues 2398–2408 (RIILETSLWTP) are cytoplasmic. The chain crosses the membrane as a helical span at residues 2409–2429 (TFLFTTIVLCTIMFFPTVLLY). Over 2430-2444 (SVTGWPRRYMELAGR) the chain is Extracellular. A helical transmembrane segment spans residues 2445-2465 (VVFAWPMLYFLIPLWVSIGIL). Over 2466–2724 (VQLLLQVFTS…LKRLVPWYRV (259 aa)) the chain is Cytoplasmic. The helical transmembrane segment at 2725-2745 (IFMLIALYQLLSFLTEYFIDI) threads the bilayer. The Extracellular segment spans residues 2746 to 2762 (HWNPGETEMEPWMCVPT). A helical membrane pass occupies residues 2763–2783 (LVVEIGFAAVVVCTFYDFIFL). Over 2784 to 2785 (DH) the chain is Cytoplasmic. The chain crosses the membrane as a helical span at residues 2786-2806 (FSLILNSIVFLMVSSSIVFYT). The Extracellular segment spans residues 2807–2823 (ASHVDGTLTSVLFPVFT). A helical transmembrane segment spans residues 2824 to 2844 (FVILRISFLQAVVWNILFLIV). The Cytoplasmic segment spans residues 2845–2858 (TVARFMLDKKYLPP). Residues 2859–2879 (LNFVHYIPLFIGIDVFVAFVG) form a helical membrane-spanning segment. At 2880–2903 (YRLEYNQRKSFLLDYSVDASRRKQ) the chain is on the extracellular side. A helical membrane pass occupies residues 2904–2924 (REILNTMLPSFVVDQMINSEL). The Cytoplasmic portion of the chain corresponds to 2925–3693 (NEEGIPTSLK…RTHFYNNKSN (769 aa)). The Guanylate cyclase 1 domain occupies 2942 to 3150 (SVIFCDVYEF…DTVNTASRMK (209 aa)). 6 disordered regions span residues 3214–3245 (DVIS…ASSG), 3359–3402 (GQTE…SRFD), 3456–3475 (SGDE…EVPL), 3485–3508 (QARE…HTPT), 3523–3596 (GCAA…ETEK), and 3620–3653 (FRRR…VDDE). Residues 3383 to 3402 (RADRRPAGRREDSRGDSRFD) show a composition bias toward basic and acidic residues. Composition is skewed to basic and acidic residues over residues 3485-3499 (QARE…KRSG), 3529-3541 (EEEK…RESE), and 3549-3569 (TESR…DARE). Positions 3626 to 3637 (AAPSEAASPSSA) are enriched in low complexity. A helical transmembrane segment spans residues 3694–3714 (INTIEQALIIFLVTFCVQTLT). Residues 3715 to 3736 (RLALPRFYVVCSHHTINLHVCT) are Extracellular-facing. A helical transmembrane segment spans residues 3737–3757 (GLYWAVRATYTLAAFVLWMLF). Over 3758-3772 (HYRNRKEVATCLELR) the chain is Cytoplasmic. A helical membrane pass occupies residues 3773 to 3793 (WMVFLLNLLFISASCVFALSN). Residues 3794–3895 (SWGVCGQQQE…GSDLVTANGR (102 aa)) lie on the Extracellular side of the membrane. Residues 3896 to 3916 (AYTYWLLSDTIELFFYIVILH) form a helical membrane-spanning segment. At 3917 to 3921 (HNTGL) the chain is on the cytoplasmic side. Residues 3922–3942 (LFQNCILVDVLLMTMSLTFII) form a helical membrane-spanning segment. Residues 3943 to 3950 (TTARETAS) lie on the Extracellular side of the membrane. A helical membrane pass occupies residues 3951–3971 (TVSTIATFPCYVFFNLVSAYC). Over 3972-4367 (KEYIDRLTFY…GSTPGSALGS (396 aa)) the chain is Cytoplasmic. The Guanylate cyclase 2 domain occupies 4024–4159 (TFLFADICGF…MDVLTGNMME (136 aa)). Mg(2+) is bound by residues aspartate 4029, isoleucine 4030, and aspartate 4073. A disordered region spans residues 4292–4367 (ASHGDSGPSD…GSTPGSALGS (76 aa)). Positions 4333 to 4344 (DGLKQLRKEIER) are enriched in basic and acidic residues. The segment covering 4356–4367 (DIGSTPGSALGS) has biased composition (polar residues).

In the N-terminal section; belongs to the cation transport ATPase (P-type) (TC 3.A.3) family. Type IV subfamily. It in the C-terminal section; belongs to the adenylyl cyclase class-4/guanylyl cyclase family. As to quaternary structure, interacts with chaperone CDC50.1; the interaction regulates guanylate cyclase GC trafficking and sensing environmental changes. Interacts with UGO; the interaction regulates guanylate cyclase GC trafficking and catalytic activity. Requires Mg(2+) as cofactor. Mn(2+) is required as a cofactor.

The protein resides in the cell membrane. The enzyme catalyses GTP = 3',5'-cyclic GMP + diphosphate. Catalyzes the synthesis of the second messenger cGMP from GTP. During the tachyzoite lytic growth cycle in host cells, detects and transduces environmental changes in potassium, phosphatidic acid and pH levels. By producing cGMP in response to these environmental changes, activates PKG and thereby regulates PKG-dependent microneme secretion which is essential for tachyzoite motility, host cell attachment invasion of and egress from host cells. May play a role in the fission of connected tachyzoites at their basal pole during egress. Does not display flippase activity towards phosphatidylserine, phosphatidic acid or phosphatidylcholine. The chain is Guanylate cyclase from Toxoplasma gondii (strain ATCC 50853 / GT1).